Consider the following 177-residue polypeptide: Small ribosomal subunit protein uS5 (177 aa).

The 64-residue stretch at 21-84 (LLDRVVKIKR…KQASRSMIHV (64 aa)) folds into the S5 DRBM domain.

The protein belongs to the universal ribosomal protein uS5 family. As to quaternary structure, part of the 30S ribosomal subunit. Contacts proteins S4 and S8.

Functionally, with S4 and S12 plays an important role in translational accuracy. Located at the back of the 30S subunit body where it stabilizes the conformation of the head with respect to the body. This is Small ribosomal subunit protein uS5 from Rhodopirellula baltica (strain DSM 10527 / NCIMB 13988 / SH1).